Reading from the N-terminus, the 544-residue chain is DNA mismatch repair protein MutL (544 aa).

The protein belongs to the DNA mismatch repair MutL/HexB family.

Functionally, this protein is involved in the repair of mismatches in DNA. It is required for dam-dependent methyl-directed DNA mismatch repair. May act as a 'molecular matchmaker', a protein that promotes the formation of a stable complex between two or more DNA-binding proteins in an ATP-dependent manner without itself being part of a final effector complex. The polypeptide is DNA mismatch repair protein MutL (Thermodesulfovibrio yellowstonii (strain ATCC 51303 / DSM 11347 / YP87)).